The chain runs to 171 residues: 3-hydroxydecanoyl-[acyl-carrier-protein] dehydratase (171 aa).

Residue histidine 70 is part of the active site.

The protein belongs to the thioester dehydratase family. FabA subfamily. In terms of assembly, homodimer.

The protein localises to the cytoplasm. It carries out the reaction a (3R)-hydroxyacyl-[ACP] = a (2E)-enoyl-[ACP] + H2O. The catalysed reaction is (3R)-hydroxydecanoyl-[ACP] = (2E)-decenoyl-[ACP] + H2O. The enzyme catalyses (2E)-decenoyl-[ACP] = (3Z)-decenoyl-[ACP]. The protein operates within lipid metabolism; fatty acid biosynthesis. Necessary for the introduction of cis unsaturation into fatty acids. Catalyzes the dehydration of (3R)-3-hydroxydecanoyl-ACP to E-(2)-decenoyl-ACP and then its isomerization to Z-(3)-decenoyl-ACP. Can catalyze the dehydratase reaction for beta-hydroxyacyl-ACPs with saturated chain lengths up to 16:0, being most active on intermediate chain length. The protein is 3-hydroxydecanoyl-[acyl-carrier-protein] dehydratase of Shewanella oneidensis (strain ATCC 700550 / JCM 31522 / CIP 106686 / LMG 19005 / NCIMB 14063 / MR-1).